Reading from the N-terminus, the 236-residue chain is Small ribosomal subunit protein uS2c (236 aa).

The protein belongs to the universal ribosomal protein uS2 family.

The protein resides in the plastid. It is found in the chloroplast. In Nymphaea alba (White water-lily), this protein is Small ribosomal subunit protein uS2c (rps2).